The sequence spans 397 residues: F-box protein At5g25290 (397 aa).

The F-box domain occupies 11-56 (VTLWSEIPMDILRSVFERLSFVDLHRAKIVCSHWYSCSKQSFLRKT).

This is F-box protein At5g25290 from Arabidopsis thaliana (Mouse-ear cress).